The primary structure comprises 237 residues: Ribonuclease PH (237 aa).

Residues Arg-86 and 124-126 each bind phosphate; that span reads GTR.

Belongs to the RNase PH family. Homohexameric ring arranged as a trimer of dimers.

It carries out the reaction tRNA(n+1) + phosphate = tRNA(n) + a ribonucleoside 5'-diphosphate. In terms of biological role, phosphorolytic 3'-5' exoribonuclease that plays an important role in tRNA 3'-end maturation. Removes nucleotide residues following the 3'-CCA terminus of tRNAs; can also add nucleotides to the ends of RNA molecules by using nucleoside diphosphates as substrates, but this may not be physiologically important. Probably plays a role in initiation of 16S rRNA degradation (leading to ribosome degradation) during starvation. This Cereibacter sphaeroides (strain ATCC 17025 / ATH 2.4.3) (Rhodobacter sphaeroides) protein is Ribonuclease PH.